The following is a 397-amino-acid chain: Protein Brevis radix-like 1 (397 aa).

2 disordered regions span residues 14 to 37 (GAPP…AGEC) and 105 to 148 (RAGS…EDDE). The span at 124–148 (AGDEEEEEEEEEEEGTTADGSEDDE) shows a compositional bias: acidic residues. The BRX 1 domain maps to 150–205 (KEWVAQVEPGVLITFLSLPEGGNDLKRIRFSREIFNKWQAQRWWAENYEKVMELYN). Disordered stretches follow at residues 212–278 (QTPL…QQHH) and 300–342 (SISG…DQER). Positions 220–230 (KSEDESLKEDI) are enriched in basic and acidic residues. Residues 309-320 (SSMDASMRSSSS) are compositionally biased toward low complexity. Positions 342–397 (REWVEEDEPGVYITIRALPGGIRELRRVRFSREKFSEMHARLWWEENRARIHDQYL) constitute a BRX 2 domain.

It belongs to the BRX family.

It is found in the nucleus. This is Protein Brevis radix-like 1 (BRXL1) from Oryza sativa subsp. japonica (Rice).